A 399-amino-acid chain; its full sequence is Acetylornithine aminotransferase (399 aa).

Residues 97–98 and Phe-130 each bind pyridoxal 5'-phosphate; that span reads GA. Arg-133 serves as a coordination point for N(2)-acetyl-L-ornithine. Position 215-218 (215-218) interacts with pyridoxal 5'-phosphate; that stretch reads DEVQ. Residue Lys-244 is modified to N6-(pyridoxal phosphate)lysine. Residue Thr-272 participates in N(2)-acetyl-L-ornithine binding. Residue Thr-273 coordinates pyridoxal 5'-phosphate.

The protein belongs to the class-III pyridoxal-phosphate-dependent aminotransferase family. ArgD subfamily. Homodimer. Requires pyridoxal 5'-phosphate as cofactor.

It is found in the cytoplasm. The catalysed reaction is N(2)-acetyl-L-ornithine + 2-oxoglutarate = N-acetyl-L-glutamate 5-semialdehyde + L-glutamate. It functions in the pathway amino-acid biosynthesis; L-arginine biosynthesis; N(2)-acetyl-L-ornithine from L-glutamate: step 4/4. This Mesorhizobium japonicum (strain LMG 29417 / CECT 9101 / MAFF 303099) (Mesorhizobium loti (strain MAFF 303099)) protein is Acetylornithine aminotransferase.